The sequence spans 504 residues: 2,3-bisphosphoglycerate-independent phosphoglycerate mutase (504 aa).

Residues aspartate 9 and serine 59 each coordinate Mn(2+). The active-site Phosphoserine intermediate is serine 59. Substrate-binding positions include histidine 120, 149–150, arginine 181, arginine 187, 253–256, and lysine 326; these read RD and RPDR. 5 residues coordinate Mn(2+): aspartate 393, histidine 397, aspartate 434, histidine 435, and histidine 451.

This sequence belongs to the BPG-independent phosphoglycerate mutase family. The cofactor is Mn(2+).

The catalysed reaction is (2R)-2-phosphoglycerate = (2R)-3-phosphoglycerate. The protein operates within carbohydrate degradation; glycolysis; pyruvate from D-glyceraldehyde 3-phosphate: step 3/5. Functionally, catalyzes the interconversion of 2-phosphoglycerate and 3-phosphoglycerate. This chain is 2,3-bisphosphoglycerate-independent phosphoglycerate mutase, found in Haloquadratum walsbyi (strain DSM 16790 / HBSQ001).